Reading from the N-terminus, the 511-residue chain is 2-isopropylmalate synthase (511 aa).

The region spanning 5–267 (IQIFDTTLRD…QTQINLEETK (263 aa)) is the Pyruvate carboxyltransferase domain. Residues Asp-14, His-202, His-204, and Asn-238 each coordinate Mn(2+). Positions 391–511 (KVETLQLQFV…NTKVEEGIHS (121 aa)) are regulatory domain.

This sequence belongs to the alpha-IPM synthase/homocitrate synthase family. LeuA type 1 subfamily. In terms of assembly, homodimer. The cofactor is Mn(2+).

The protein localises to the cytoplasm. The enzyme catalyses 3-methyl-2-oxobutanoate + acetyl-CoA + H2O = (2S)-2-isopropylmalate + CoA + H(+). Its pathway is amino-acid biosynthesis; L-leucine biosynthesis; L-leucine from 3-methyl-2-oxobutanoate: step 1/4. Catalyzes the condensation of the acetyl group of acetyl-CoA with 3-methyl-2-oxobutanoate (2-ketoisovalerate) to form 3-carboxy-3-hydroxy-4-methylpentanoate (2-isopropylmalate). The protein is 2-isopropylmalate synthase of Staphylococcus saprophyticus subsp. saprophyticus (strain ATCC 15305 / DSM 20229 / NCIMB 8711 / NCTC 7292 / S-41).